The following is a 149-amino-acid chain: Transcriptional repressor NrdR (149 aa).

Residues 3–34 fold into a zinc finger; that stretch reads CPFCSATDTKVIDSRLVAEGHQVRRRRECTEC. An ATP-cone domain is found at 49–139; the sequence is PRVIKRDGSR…VYRAFEDVSE (91 aa).

The protein belongs to the NrdR family. Zn(2+) is required as a cofactor.

Negatively regulates transcription of bacterial ribonucleotide reductase nrd genes and operons by binding to NrdR-boxes. In Shewanella putrefaciens (strain CN-32 / ATCC BAA-453), this protein is Transcriptional repressor NrdR.